A 557-amino-acid chain; its full sequence is Formate--tetrahydrofolate ligase (557 aa).

67 to 74 serves as a coordination point for ATP; sequence TPAGEGKT.

It belongs to the formate--tetrahydrofolate ligase family.

The enzyme catalyses (6S)-5,6,7,8-tetrahydrofolate + formate + ATP = (6R)-10-formyltetrahydrofolate + ADP + phosphate. Its pathway is one-carbon metabolism; tetrahydrofolate interconversion. This Cereibacter sphaeroides (strain KD131 / KCTC 12085) (Rhodobacter sphaeroides) protein is Formate--tetrahydrofolate ligase.